Consider the following 211-residue polypeptide: MSFKTAEVSSLAERINWEKVDGLVPAIVQDFQSSQVLMMGYMNQEALVKTGETGQVTFFSRTKERLWTKGETSGNVLQLVNMSLDCDNDTLLVKVNPIGPTCHTGTTTCWDGDPQEESQMVWLHQLEQLLAARKSAGPDSSYTASLYARGTKRISQKVGEEGVEVALAATSGDKAELVCESADLIYHLLVLLQDQGLSMNDVINKLKERHK.

The phosphoribosyl-AMP cyclohydrolase stretch occupies residues 1 to 122 (MSFKTAEVSS…DPQEESQMVW (122 aa)). Positions 123–211 (LHQLEQLLAA…VINKLKERHK (89 aa)) are phosphoribosyl-ATP pyrophosphohydrolase.

It in the N-terminal section; belongs to the PRA-CH family. In the C-terminal section; belongs to the PRA-PH family.

The protein localises to the cytoplasm. The enzyme catalyses 1-(5-phospho-beta-D-ribosyl)-ATP + H2O = 1-(5-phospho-beta-D-ribosyl)-5'-AMP + diphosphate + H(+). It catalyses the reaction 1-(5-phospho-beta-D-ribosyl)-5'-AMP + H2O = 1-(5-phospho-beta-D-ribosyl)-5-[(5-phospho-beta-D-ribosylamino)methylideneamino]imidazole-4-carboxamide. It participates in amino-acid biosynthesis; L-histidine biosynthesis; L-histidine from 5-phospho-alpha-D-ribose 1-diphosphate: step 2/9. Its pathway is amino-acid biosynthesis; L-histidine biosynthesis; L-histidine from 5-phospho-alpha-D-ribose 1-diphosphate: step 3/9. The sequence is that of Histidine biosynthesis bifunctional protein HisIE from Vibrio vulnificus (strain CMCP6).